Here is a 303-residue protein sequence, read N- to C-terminus: UDP-N-acetylenolpyruvoylglucosamine reductase (303 aa).

Residues 32–212 (IGGKADLFLN…EQETKEYLAK (181 aa)) enclose the FAD-binding PCMH-type domain. Arg-176 is an active-site residue. Catalysis depends on Ser-226, which acts as the Proton donor. Glu-296 is a catalytic residue.

Belongs to the MurB family. FAD serves as cofactor.

The protein resides in the cytoplasm. It carries out the reaction UDP-N-acetyl-alpha-D-muramate + NADP(+) = UDP-N-acetyl-3-O-(1-carboxyvinyl)-alpha-D-glucosamine + NADPH + H(+). The protein operates within cell wall biogenesis; peptidoglycan biosynthesis. Its function is as follows. Cell wall formation. This Desulforamulus reducens (strain ATCC BAA-1160 / DSM 100696 / MI-1) (Desulfotomaculum reducens) protein is UDP-N-acetylenolpyruvoylglucosamine reductase.